The following is a 216-amino-acid chain: Pyrophosphatase PpaX (216 aa).

Asp-12 acts as the Nucleophile in catalysis.

This sequence belongs to the HAD-like hydrolase superfamily. PpaX family. It depends on Mg(2+) as a cofactor.

The catalysed reaction is diphosphate + H2O = 2 phosphate + H(+). Its function is as follows. Hydrolyzes pyrophosphate formed during P-Ser-HPr dephosphorylation by HPrK/P. Might play a role in controlling the intracellular pyrophosphate pool. The polypeptide is Pyrophosphatase PpaX (Bacillus pumilus (strain SAFR-032)).